Consider the following 320-residue polypeptide: Biotin synthase (320 aa).

The region spanning 43–270 is the Radical SAM core domain; the sequence is GAVQKSQLLS…KSWVRLSAGR (228 aa). The [4Fe-4S] cluster site is built by Cys58, Cys62, and Cys65. 4 residues coordinate [2Fe-2S] cluster: Cys102, Cys133, Cys193, and Arg265.

Belongs to the radical SAM superfamily. Biotin synthase family. In terms of assembly, homodimer. The cofactor is [4Fe-4S] cluster. [2Fe-2S] cluster is required as a cofactor.

It carries out the reaction (4R,5S)-dethiobiotin + (sulfur carrier)-SH + 2 reduced [2Fe-2S]-[ferredoxin] + 2 S-adenosyl-L-methionine = (sulfur carrier)-H + biotin + 2 5'-deoxyadenosine + 2 L-methionine + 2 oxidized [2Fe-2S]-[ferredoxin]. Its pathway is cofactor biosynthesis; biotin biosynthesis; biotin from 7,8-diaminononanoate: step 2/2. In terms of biological role, catalyzes the conversion of dethiobiotin (DTB) to biotin by the insertion of a sulfur atom into dethiobiotin via a radical-based mechanism. The chain is Biotin synthase from Hyphomonas neptunium (strain ATCC 15444).